The sequence spans 519 residues: MEKTLLHLRDITKIYDDGFAAVNKFDLKIKKGEFVTLLGPSGCGKTTMLKIIAGFEQPTNGKILYNGIDIKDMPIRLRPTSTVFQDYALFPNMTVKQNIKYGLKLMRKPKDNVDQSIYLQADKVYNSASKKANEKIKELKKQRRGLLAEIKKMDLKYQKNKNIFEIKEMRKNQYLGTLDELYQKQGINKNGKPGFLNYFKSWFSHEKLNLNDPIDREIFNLKKAYKEKSGLDKRYDKITYKYNDLDYWESYWATYPQLKKEQFENKNITRLLTKEEVEKEANRVINLVGLSARKDSYPSDLSGGMQQRVALARSLVIQPEIILLDEPLSALDAKVRKQLQDELKKLHKNLGITFILVTHDQEEALSLSDKVVVMSNGQIEQVGKPSDIYDSPNSLWVANFIGKTNIFEGHYIAKGEVEFDGITSKTDVINGFSENEACYIMIRPEDFDVVKKDEGSINARVESVLYKGLMWDIKCKYNDMIISVEGVNKVNEGDEIGLDWDDIDVHVIKKDYLNNEQAI.

An ABC transporter domain is found at 6–401 (LHLRDITKIY…PNSLWVANFI (396 aa)). 39-46 (GPSGCGKT) serves as a coordination point for ATP. Residues 107 to 270 (RKPKDNVDQS…EQFENKNITR (164 aa)) are insert.

This sequence belongs to the ABC transporter superfamily. Spermidine/putrescine importer (TC 3.A.1.11.1) family. The complex is composed of two ATP-binding proteins (PotA), two transmembrane proteins (PotB and PotC) and a solute-binding protein (PotD).

Its subcellular location is the cell membrane. It carries out the reaction ATP + H2O + polyamine-[polyamine-binding protein]Side 1 = ADP + phosphate + polyamineSide 2 + [polyamine-binding protein]Side 1.. Its function is as follows. Part of the ABC transporter complex PotABCD involved in spermidine/putrescine import. Responsible for energy coupling to the transport system. This is Spermidine/putrescine import ATP-binding protein PotA from Ureaplasma parvum serovar 3 (strain ATCC 700970).